Reading from the N-terminus, the 101-residue chain is Urease subunit beta (101 aa).

Belongs to the urease beta subunit family. Heterotrimer of UreA (gamma), UreB (beta) and UreC (alpha) subunits. Three heterotrimers associate to form the active enzyme.

It is found in the cytoplasm. The catalysed reaction is urea + 2 H2O + H(+) = hydrogencarbonate + 2 NH4(+). It participates in nitrogen metabolism; urea degradation; CO(2) and NH(3) from urea (urease route): step 1/1. This is Urease subunit beta from Roseobacter denitrificans (strain ATCC 33942 / OCh 114) (Erythrobacter sp. (strain OCh 114)).